Here is a 253-residue protein sequence, read N- to C-terminus: Claudin domain-containing protein 1 (253 aa).

The helical transmembrane segment at phenylalanine 5–alanine 25 threads the bilayer. 2 N-linked (GlcNAc...) asparagine glycosylation sites follow: asparagine 42 and asparagine 72. The next 3 membrane-spanning stretches (helical) occupy residues phenylalanine 141–alanine 161, isoleucine 175–isoleucine 195, and phenylalanine 216–alanine 236.

The protein belongs to the PMP-22/EMP/MP20 family.

It localises to the cell junction. It is found in the tight junction. The protein localises to the cell membrane. In terms of biological role, plays a role in negatively regulating the permeability of cells to small molecules. This is Claudin domain-containing protein 1 (CLDND1) from Macaca fascicularis (Crab-eating macaque).